The primary structure comprises 220 residues: MKKEKAVVVFSGGQDSTTCLFWAIEQFAEVEAVTFNYNQRHKLEIDCAAKIAKELGIKHTVLDMSLLNQLAPNALTRTDMEITHEEGELPSTFVDGRNLLFLSFAAVLAKQVGARHIVTGVCETDFSGYPDCRDVFVKSLNVTLNLSMDYPFVIHTPLMWIDKAETWKLSDELGAFEFVREKTLTCYNGIIGDGCGECPACQLRKAGLDTYLQEREGANN.

An ATP-binding site is contributed by 10–20; that stretch reads FSGGQDSTTCL. Zn(2+)-binding residues include Cys-186, Cys-195, Cys-198, and Cys-201.

It belongs to the QueC family. In terms of assembly, homodimer. It depends on Zn(2+) as a cofactor.

It carries out the reaction 7-carboxy-7-deazaguanine + NH4(+) + ATP = 7-cyano-7-deazaguanine + ADP + phosphate + H2O + H(+). It participates in purine metabolism; 7-cyano-7-deazaguanine biosynthesis. Catalyzes the ATP-dependent conversion of 7-carboxy-7-deazaguanine (CDG) to 7-cyano-7-deazaguanine (preQ(0)). The chain is 7-cyano-7-deazaguanine synthase from Bacillus cereus (strain G9842).